The sequence spans 365 residues: Sulfate/thiosulfate import ATP-binding protein CysA (365 aa).

In terms of domain architecture, ABC transporter spans 3–237 (IEIARIKKSF…PATRFVLEFM (235 aa)). ATP is bound at residue 35–42 (GPSGSGKT).

This sequence belongs to the ABC transporter superfamily. Sulfate/tungstate importer (TC 3.A.1.6) family. The complex is composed of two ATP-binding proteins (CysA), two transmembrane proteins (CysT and CysW) and a solute-binding protein (CysP).

It is found in the cell inner membrane. It catalyses the reaction sulfate(out) + ATP + H2O = sulfate(in) + ADP + phosphate + H(+). The enzyme catalyses thiosulfate(out) + ATP + H2O = thiosulfate(in) + ADP + phosphate + H(+). Functionally, part of the ABC transporter complex CysAWTP involved in sulfate/thiosulfate import. Responsible for energy coupling to the transport system. The sequence is that of Sulfate/thiosulfate import ATP-binding protein CysA from Salmonella typhimurium (strain LT2 / SGSC1412 / ATCC 700720).